A 104-amino-acid polypeptide reads, in one-letter code: Transcription and mRNA export factor ENY2 (104 aa).

Basic and acidic residues predominate over residues 1-14; it reads MADYGSDKKSRDNQ. Residues 1–22 form a disordered region; the sequence is MADYGSDKKSRDNQMRSAINQQ.

Belongs to the ENY2 family. Component of the nuclear pore complex (NPC)-associated TREX-2 complex (transcription and export complex 2). Component of the SAGA transcription coactivator-HAT complex. Within the SAGA complex, participates in a subcomplex of SAGA called the DUB module (deubiquitination module).

Its subcellular location is the nucleus. It is found in the nucleoplasm. Its function is as follows. Involved in mRNA export coupled transcription activation by association with both the TREX-2 and the SAGA complexes. The transcription regulatory histone acetylation (HAT) complex SAGA is a multiprotein complex that activates transcription by remodeling chromatin and mediating histone acetylation and deubiquitination. Within the SAGA complex, participates in a subcomplex that specifically deubiquitinates histones. The SAGA complex is recruited to specific gene promoters by activators, where it is required for transcription. The TREX-2 complex functions in docking export-competent ribonucleoprotein particles (mRNPs) to the nuclear entrance of the nuclear pore complex (nuclear basket). TREX-2 participates in mRNA export and accurate chromatin positioning in the nucleus by tethering genes to the nuclear periphery. In Ciona intestinalis (Transparent sea squirt), this protein is Transcription and mRNA export factor ENY2.